A 373-amino-acid polypeptide reads, in one-letter code: Queuine tRNA-ribosyltransferase (373 aa).

The active-site Proton acceptor is aspartate 90. Residues 90–94 (DSGGF), aspartate 144, glutamine 193, and glycine 220 each bind substrate. The interval 251–257 (GVGTPED) is RNA binding. The active-site Nucleophile is the aspartate 270. The RNA binding; important for wobble base 34 recognition stretch occupies residues 275-279 (TRNAR). Residues cysteine 308, cysteine 310, cysteine 313, and histidine 339 each coordinate Zn(2+).

The protein belongs to the queuine tRNA-ribosyltransferase family. In terms of assembly, homodimer. Within each dimer, one monomer is responsible for RNA recognition and catalysis, while the other monomer binds to the replacement base PreQ1. It depends on Zn(2+) as a cofactor.

It catalyses the reaction 7-aminomethyl-7-carbaguanine + guanosine(34) in tRNA = 7-aminomethyl-7-carbaguanosine(34) in tRNA + guanine. It functions in the pathway tRNA modification; tRNA-queuosine biosynthesis. Functionally, catalyzes the base-exchange of a guanine (G) residue with the queuine precursor 7-aminomethyl-7-deazaguanine (PreQ1) at position 34 (anticodon wobble position) in tRNAs with GU(N) anticodons (tRNA-Asp, -Asn, -His and -Tyr). Catalysis occurs through a double-displacement mechanism. The nucleophile active site attacks the C1' of nucleotide 34 to detach the guanine base from the RNA, forming a covalent enzyme-RNA intermediate. The proton acceptor active site deprotonates the incoming PreQ1, allowing a nucleophilic attack on the C1' of the ribose to form the product. After dissociation, two additional enzymatic reactions on the tRNA convert PreQ1 to queuine (Q), resulting in the hypermodified nucleoside queuosine (7-(((4,5-cis-dihydroxy-2-cyclopenten-1-yl)amino)methyl)-7-deazaguanosine). This Campylobacter jejuni subsp. jejuni serotype O:2 (strain ATCC 700819 / NCTC 11168) protein is Queuine tRNA-ribosyltransferase.